Here is a 247-residue protein sequence, read N- to C-terminus: MAVRAQFENSNEVGVFARLTNSYAVVAIGASENFYSVFEAELQDVIPICHATIAGTRIVGRLTAGNRKGLLVPTTTTDQELQHLRNTLPDSVKIQRIEERLSALGNVICCNDHVALIHPDLERETEEIIADVLGVEVFRQTIADNVLTGSYMALSNQGGIVHPKTSIRDQDELSSLLQVPLVAGSVNRGSAVVGAGMVVNDWLAVTGLDTTATELSVIESVFRLGEMGPRGVGMGSTNKESIVESFY.

Ser-174 and Ser-175 each carry phosphoserine; by CK1.

It belongs to the eIF-6 family. Monomer. Associates with the 60S ribosomal subunit. Phosphorylation at Ser-174 and Ser-175 promotes nuclear export.

The protein localises to the cytoplasm. The protein resides in the nucleus. It is found in the nucleolus. In terms of biological role, binds to the 60S ribosomal subunit and prevents its association with the 40S ribosomal subunit to form the 80S initiation complex in the cytoplasm. Is also involved in ribosome biogenesis. Associates with pre-60S subunits in the nucleus and is involved in its nuclear export. This is Eukaryotic translation initiation factor 6 (tif6) from Aspergillus oryzae (strain ATCC 42149 / RIB 40) (Yellow koji mold).